The primary structure comprises 465 residues: Neuromedin-K receptor (465 aa).

Topologically, residues 1–84 are extracellular; sequence MATLPAAETW…TNQFVQPSWR (84 aa). Residues N23, N50, and N73 are each glycosylated (N-linked (GlcNAc...) asparagine). Residues 85–107 traverse the membrane as a helical segment; that stretch reads IALWSLAYGVVVAVAVLGNLIVI. Residues 108-117 are Cytoplasmic-facing; that stretch reads WIILAHKRMR. A helical membrane pass occupies residues 118-139; that stretch reads TVTNYFLVNLAFSDASMAAFNT. Over 140–159 the chain is Extracellular; that stretch reads LVNFIYALHSEWYFGANYCR. Residues C158 and C233 are joined by a disulfide bond. A helical transmembrane segment spans residues 160–181; it reads FQNFFPITAVFASIYSMTAIAV. The Cytoplasmic segment spans residues 182–201; sequence DRYMAIIDPLKPRLSATATK. A helical transmembrane segment spans residues 202 to 222; it reads IVIGSIWILAFLLAFPQCLYS. The Extracellular portion of the chain corresponds to 223–245; the sequence is KTKVMPGRTLCFVQWPEGPKQHF. Residues 246–270 traverse the membrane as a helical segment; sequence TYHIIVIILVYCFPLLIMGITYTIV. Topologically, residues 271 to 299 are cytoplasmic; sequence GITLWGGEIPGDTCDKYHEQLKAKRKVVK. Residues 300-321 form a helical membrane-spanning segment; the sequence is MMIIVVMTFAICWLPYHIYFIL. Topologically, residues 322 to 334 are extracellular; that stretch reads TAIYQQLNRWKYI. The chain crosses the membrane as a helical span at residues 335–359; it reads QQVYLASFWLAMSSTMYNPIIYCCL. Topologically, residues 360 to 465 are cytoplasmic; that stretch reads NKRFRAGFKR…SPYTSVDEYS (106 aa). C374 carries S-palmitoyl cysteine lipidation. A disordered region spans residues 415 to 465; sequence PNDADTTRSSRKKRATPRDPSFNGCSRRNSKSASATSSFISSPYTSVDEYS. The span at 445–465 shows a compositional bias: low complexity; that stretch reads KSASATSSFISSPYTSVDEYS.

The protein belongs to the G-protein coupled receptor 1 family. In terms of processing, the anchoring of this receptor to the plasma membrane is probably mediated by the palmitoylation of a cysteine residue.

It localises to the cell membrane. Functionally, this is a receptor for the tachykinin neuropeptide neuromedin-K (neurokinin B). It is associated with G proteins that activate a phosphatidylinositol-calcium second messenger system. The rank order of affinity of this receptor to tachykinins is: neuromedin-K &gt; substance K &gt; substance P. This chain is Neuromedin-K receptor (TACR3), found in Homo sapiens (Human).